Consider the following 364-residue polypeptide: Putative apoptosis inhibitor ORF42 (364 aa).

The stretch at 24 to 89 (RLATFRGYEY…CREGVVSAPQ (66 aa)) is one BIR 1 repeat. Residues 83-126 (GVVSAPQQQPPPPPSTSIGAVGGDPRPEDMNVPERGWDPPMSKD) are disordered. A compositionally biased stretch (basic and acidic residues) spans 117 to 126 (RGWDPPMSKD). 2 BIR repeats span residues 127–193 (PKST…PLVV) and 236–300 (RIAS…ANMA). An RING-type zinc finger spans residues 315 to 350 (CVICLGAKADTILKPCLHYSLCYGCSTQVQKCPLCR).

Its function is as follows. May act as an apoptosis inhibitor. The polypeptide is Putative apoptosis inhibitor ORF42 (Magallana gigas (Pacific oyster)).